The primary structure comprises 707 residues: Alpha-hemolysin translocation ATP-binding protein HlyB (707 aa).

The Peptidase C39 domain occupies 2–125; that stretch reads DFHHKNNYGL…DLYQGNIILI (124 aa). Residue H83 is part of the active site. One can recognise an ABC transmembrane type-1 domain in the interval 154-436; sequence FIETLIVSVF…LAQLWQDFQQ (283 aa). Transmembrane regions (helical) follow at residues 158–178, 191–211, 269–289, 295–315, and 387–407; these read LIVS…FQVV, LNII…LSGL, ALTS…MWYY, LVIL…SPIL, and AVMI…DLSI. In terms of domain architecture, ABC transporter spans 468–703; that stretch reads ISFRNIRFRY…PESLYHYLHQ (236 aa). ATP is bound at residue 502-509; the sequence is GRSGSGKS.

It belongs to the ABC transporter superfamily. Protein-1 exporter (TC 3.A.1.109) family.

The protein localises to the cell membrane. Its function is as follows. Involved in the export of hemolysin A. The protein is Alpha-hemolysin translocation ATP-binding protein HlyB (hlyB) of Proteus vulgaris.